Reading from the N-terminus, the 235-residue chain is Fibrillarin-like rRNA/tRNA 2'-O-methyltransferase (235 aa).

Residues 91 to 92 (TT), 110 to 111 (EF), 137 to 138 (DA), and 157 to 160 (DVAQ) contribute to the S-adenosyl-L-methionine site.

The protein belongs to the methyltransferase superfamily. Fibrillarin family. In terms of assembly, interacts with nop5. Component of box C/D small ribonucleoprotein (sRNP) particles that contain rpl7ae, FlpA and nop5, plus a guide RNA.

In terms of biological role, involved in pre-rRNA and tRNA processing. Utilizes the methyl donor S-adenosyl-L-methionine to catalyze the site-specific 2'-hydroxyl methylation of ribose moieties in rRNA and tRNA. Site specificity is provided by a guide RNA that base pairs with the substrate. Methylation occurs at a characteristic distance from the sequence involved in base pairing with the guide RNA. This is Fibrillarin-like rRNA/tRNA 2'-O-methyltransferase from Pyrobaculum aerophilum (strain ATCC 51768 / DSM 7523 / JCM 9630 / CIP 104966 / NBRC 100827 / IM2).